Reading from the N-terminus, the 368-residue chain is Peptide chain release factor 2 (368 aa).

Residue Gln-245 is modified to N5-methylglutamine.

It belongs to the prokaryotic/mitochondrial release factor family. In terms of processing, methylated by PrmC. Methylation increases the termination efficiency of RF2.

Its subcellular location is the cytoplasm. Functionally, peptide chain release factor 2 directs the termination of translation in response to the peptide chain termination codons UGA and UAA. The protein is Peptide chain release factor 2 (prfB) of Treponema pallidum (strain Nichols).